Here is a 656-residue protein sequence, read N- to C-terminus: Protein EMBRYO SAC DEVELOPMENT ARREST 30 (656 aa).

Residues 9–29 (WIALFVLILSMGSLVVHLSMT) form a helical; Signal-anchor for type II membrane protein membrane-spanning segment. Asn119 carries an N-linked (GlcNAc...) asparagine glycan. Residues 381 to 426 (LSELVGPETPLPENTYKMPPRKSDKQLKEEWNKAGPRPRPLPPPPD) are disordered. Basic and acidic residues predominate over residues 401–412 (RKSDKQLKEEWN). Pro residues predominate over residues 417–426 (RPRPLPPPPD). N-linked (GlcNAc...) asparagine glycosylation is found at Asn444, Asn522, Asn534, and Asn544. Residues 631–656 (SETEEEFAKSKVASAFDQDEEWDPND) are disordered. A compositionally biased stretch (acidic residues) spans 647–656 (DQDEEWDPND).

It belongs to the glycosyltransferase GT106 family.

The protein resides in the membrane. Its pathway is glycan metabolism. This chain is Protein EMBRYO SAC DEVELOPMENT ARREST 30, found in Arabidopsis thaliana (Mouse-ear cress).